Here is a 290-residue protein sequence, read N- to C-terminus: Protein SSO1 (290 aa).

The Cytoplasmic segment spans residues 1–265 (MSYNNPYQLE…ARKARKNKIR (265 aa)). One can recognise a t-SNARE coiled-coil homology domain in the interval 190 to 252 (LAEVQARHQE…EQGVGHTDKA (63 aa)). Residues 266–287 (CWLIVFAIIVVVVVVVVVPAVV) traverse the membrane as a helical; Anchor for type IV membrane protein segment. Residues 288–290 (KTR) are Extracellular-facing.

It belongs to the syntaxin family.

The protein localises to the membrane. Required for vesicle fusion with the plasma membrane. The sequence is that of Protein SSO1 (SSO1) from Saccharomyces cerevisiae (strain ATCC 204508 / S288c) (Baker's yeast).